Reading from the N-terminus, the 726-residue chain is Catalase-peroxidase (726 aa).

The segment at residues 98 to 226 (WHSAGTYRMQ…LAAVHMGLIY (129 aa)) is a cross-link (tryptophyl-tyrosyl-methioninium (Trp-Tyr) (with M-252)). Residue histidine 99 is the Proton acceptor of the active site. The tryptophyl-tyrosyl-methioninium (Tyr-Met) (with W-98) cross-link spans 226 to 252 (YVNPEGVNGQPDPARTAQHVRETFARM). Histidine 267 lines the heme b pocket.

It belongs to the peroxidase family. Peroxidase/catalase subfamily. In terms of assembly, homodimer or homotetramer. It depends on heme b as a cofactor. Formation of the three residue Trp-Tyr-Met cross-link is important for the catalase, but not the peroxidase activity of the enzyme.

It catalyses the reaction H2O2 + AH2 = A + 2 H2O. The enzyme catalyses 2 H2O2 = O2 + 2 H2O. Functionally, bifunctional enzyme with both catalase and broad-spectrum peroxidase activity. The chain is Catalase-peroxidase from Roseobacter denitrificans (strain ATCC 33942 / OCh 114) (Erythrobacter sp. (strain OCh 114)).